The following is a 152-amino-acid chain: S-Adenosylmethionine lyase (152 aa).

Homotetramer. Interacts with host METK; this interaction induces the polymerization of METK into filaments that are enzymatically inactive.

It carries out the reaction S-adenosyl-L-methionine = L-homoserine lactone + S-methyl-5'-thioadenosine. Functionally, degrades the intracellular SAM pools of the host cell and inhibits the host S-adenosylmethionine synthase METK/MAT, thereby preventing methylation of the viral genome. Induces the polymerization of METK into filaments that are enzymatically inactive. Keeping the viral genome in an unmethylated state allows the phage to shift from a lytic infection under normal growth conditions to a transient lysogenic infection under glucose starvation, by blocking its own expression. Does not protect the virus immune against host restriction-modification systems. The protein is S-Adenosylmethionine lyase of Escherichia coli (Bacteriophage T3).